Consider the following 213-residue polypeptide: Thymidine kinase (213 aa).

ATP is bound by residues 22–29 (GSMFSGKT) and 94–97 (DEAQ). Glu95 (proton acceptor) is an active-site residue. Residues Cys151, Cys154, Cys183, and Cys186 each contribute to the Zn(2+) site. A disordered region spans residues 185–213 (RCFQPPRPTSTSSLKAPAPAATAPRPELP). Low complexity predominate over residues 193-213 (TSTSSLKAPAPAATAPRPELP).

This sequence belongs to the thymidine kinase family. Homotetramer.

Its subcellular location is the cytoplasm. The catalysed reaction is thymidine + ATP = dTMP + ADP + H(+). In Rhodothermus sp. (strain ITI 518), this protein is Thymidine kinase.